The sequence spans 962 residues: Glycine dehydrogenase (decarboxylating) (962 aa).

At Lys-709 the chain carries N6-(pyridoxal phosphate)lysine.

It belongs to the GcvP family. In terms of assembly, the glycine cleavage system is composed of four proteins: P, T, L and H. It depends on pyridoxal 5'-phosphate as a cofactor.

It carries out the reaction N(6)-[(R)-lipoyl]-L-lysyl-[glycine-cleavage complex H protein] + glycine + H(+) = N(6)-[(R)-S(8)-aminomethyldihydrolipoyl]-L-lysyl-[glycine-cleavage complex H protein] + CO2. The glycine cleavage system catalyzes the degradation of glycine. The P protein binds the alpha-amino group of glycine through its pyridoxal phosphate cofactor; CO(2) is released and the remaining methylamine moiety is then transferred to the lipoamide cofactor of the H protein. In Shewanella sediminis (strain HAW-EB3), this protein is Glycine dehydrogenase (decarboxylating).